We begin with the raw amino-acid sequence, 130 residues long: Early 3 receptor internalization and degradation beta protein (130 aa).

Positions 1–19 (MKRSVIFVLLIFCALPVLC) are cleaved as a signal peptide. Residues 53–77 (AWLYAIISVMVFCSTIFALAIYPYL) traverse the membrane as a helical segment. Residues 122-125 (YFNL) form a tyrosine-based sorting motif region.

This sequence belongs to the adenoviridae E3_RID-beta family. In terms of assembly, interacts with E3 RID-alpha and E3 CR1-alpha. In terms of processing, phosphorylated on serine. Post-translationally, O-glycosylated, but not N-glycosylated.

The protein localises to the host membrane. Prevents infected cell apoptosis induced by the host immune system. Acts by down-regulating a number of cell surface receptors in the tumor necrosis factor (TNF) receptor superfamily, namely FAS, TNFRSF10A/TRAIL receptor 1, and TNFRSF10B/TRAIL receptor 2. Down-regulation of these death receptors protects adenovirus-infected cells from apoptosis induced by the death receptor ligands Fas ligand and TRAIL. RID complex also down-regulates certain tyrosine kinase cell surface receptors, especially the epidermal growth factor receptor (EGFR). RID-mediated Fas and EGFR down-regulation occurs via endocytosis of the receptors into endosomes followed by transport to and degradation within lysosomes. The sequence is that of Early 3 receptor internalization and degradation beta protein from Human adenovirus C serotype 2 (HAdV-2).